A 639-amino-acid chain; its full sequence is ATP-dependent rRNA helicase spb4 (639 aa).

Residues 14–42 carry the Q motif motif; that stretch reads WEAVSPSLSEWVLDAVASWGFSKMTPVQA. In terms of domain architecture, Helicase ATP-binding spans 45-249; it reads IPLFMAHKDV…RVGLRNPVKV (205 aa). An ATP-binding site is contributed by 58–65; it reads AVTGSGKT. The DEAD box signature appears at 197 to 200; it reads DEAD. Positions 283-437 constitute a Helicase C-terminal domain; the sequence is TLRPILTSLQ…PISISDSDAS (155 aa). Positions 521–624 form a coiled coil; that stretch reads AYKDKQREKR…LRRAEKAAGK (104 aa). A disordered region spans residues 536–639; it reads QESAEAGAQQ…GDDDEFEGFD (104 aa). The segment covering 575-622 has biased composition (basic and acidic residues); it reads KHLQQEKRRWEKMTEEEKQKARETQKMLEEIRQKNEEARALRRAEKAA. Residues 628–639 are compositionally biased toward acidic residues; that stretch reads NDGDDDEFEGFD.

It belongs to the DEAD box helicase family. DDX55/SPB4 subfamily. Component of pre-60S ribosomal complexes.

It localises to the nucleus. Its subcellular location is the nucleolus. It catalyses the reaction ATP + H2O = ADP + phosphate + H(+). In terms of biological role, ATP-binding RNA helicase involved in the biogenesis of 60S ribosomal subunits. Binds 90S pre-ribosomal particles and dissociates from pre-60S ribosomal particles after processing of 27SB pre-rRNA. Required for the normal formation of 18S rRNA through the processing of pre-rRNAs at sites A0, A1 and A2, and the normal formation of 25S and 5.8S rRNAs through the processing of pre-rRNAs at sites C1 and C2. This chain is ATP-dependent rRNA helicase spb4, found in Aspergillus terreus (strain NIH 2624 / FGSC A1156).